We begin with the raw amino-acid sequence, 94 residues long: Co-chaperonin GroES (94 aa).

Belongs to the GroES chaperonin family. In terms of assembly, heptamer of 7 subunits arranged in a ring. Interacts with the chaperonin GroEL.

It is found in the cytoplasm. Together with the chaperonin GroEL, plays an essential role in assisting protein folding. The GroEL-GroES system forms a nano-cage that allows encapsulation of the non-native substrate proteins and provides a physical environment optimized to promote and accelerate protein folding. GroES binds to the apical surface of the GroEL ring, thereby capping the opening of the GroEL channel. The sequence is that of Co-chaperonin GroES from Clostridium novyi (strain NT).